We begin with the raw amino-acid sequence, 242 residues long: Ribonuclease PH (242 aa).

Phosphate-binding positions include Arg86 and 124–126 (GTR).

Belongs to the RNase PH family. In terms of assembly, homohexameric ring arranged as a trimer of dimers.

The enzyme catalyses tRNA(n+1) + phosphate = tRNA(n) + a ribonucleoside 5'-diphosphate. Phosphorolytic 3'-5' exoribonuclease that plays an important role in tRNA 3'-end maturation. Removes nucleotide residues following the 3'-CCA terminus of tRNAs; can also add nucleotides to the ends of RNA molecules by using nucleoside diphosphates as substrates, but this may not be physiologically important. Probably plays a role in initiation of 16S rRNA degradation (leading to ribosome degradation) during starvation. This is Ribonuclease PH from Photorhabdus laumondii subsp. laumondii (strain DSM 15139 / CIP 105565 / TT01) (Photorhabdus luminescens subsp. laumondii).